We begin with the raw amino-acid sequence, 552 residues long: Putative transport protein NT01EI_3867 (552 aa).

The next 5 helical transmembrane spans lie at 4–24, 26–46, 65–85, 90–112, and 158–178; these read IALTVSMLSLVAVLGLWIGNW, IYGVGLGIGGVLFGGIIVGHF, FGLILFVYSIGIQVGPGFFSS, GLRLNAFAVLMVLISGLITAAIH, and MGYAMAYPFGICGILLVIWLI. RCK C-terminal domains follow at residues 191–276 and 279–361; these read RDFD…VIGE and DTSL…IVGN. A run of 6 helical transmembrane segments spans residues 371–391, 403–425, 439–459, 464–484, 493–513, and 530–550; these read MLPVFIGIGLGVLLGSVPLFI, AGGPLVVALILGRIGSIGKLYWF, IVLFLAVVGLKSGGNFIDTLL, VTWIGYGILITAIPLLTAALL, YLTLCGMLAGAMTDPPALAFA, and VYPLAMFLRIMSPQLLALLFW.

Belongs to the AAE transporter (TC 2.A.81) family. YidE subfamily.

Its subcellular location is the cell membrane. In Edwardsiella ictaluri (strain 93-146), this protein is Putative transport protein NT01EI_3867.